The following is a 234-amino-acid chain: Protein XNDC1N (234 aa).

This chain is Protein XNDC1N, found in Homo sapiens (Human).